The sequence spans 180 residues: ATP-dependent protease subunit HslV (180 aa).

T7 is a catalytic residue. A164, C167, and T170 together coordinate Na(+).

It belongs to the peptidase T1B family. HslV subfamily. In terms of assembly, a double ring-shaped homohexamer of HslV is capped on each side by a ring-shaped HslU homohexamer. The assembly of the HslU/HslV complex is dependent on binding of ATP.

Its subcellular location is the cytoplasm. It carries out the reaction ATP-dependent cleavage of peptide bonds with broad specificity.. With respect to regulation, allosterically activated by HslU binding. Protease subunit of a proteasome-like degradation complex believed to be a general protein degrading machinery. This is ATP-dependent protease subunit HslV from Brevibacillus brevis (strain 47 / JCM 6285 / NBRC 100599).